Here is a 413-residue protein sequence, read N- to C-terminus: Tryptophan synthase beta chain (413 aa).

At Lys-107 the chain carries N6-(pyridoxal phosphate)lysine.

It belongs to the TrpB family. As to quaternary structure, tetramer of two alpha and two beta chains. The cofactor is pyridoxal 5'-phosphate.

The catalysed reaction is (1S,2R)-1-C-(indol-3-yl)glycerol 3-phosphate + L-serine = D-glyceraldehyde 3-phosphate + L-tryptophan + H2O. The protein operates within amino-acid biosynthesis; L-tryptophan biosynthesis; L-tryptophan from chorismate: step 5/5. The beta subunit is responsible for the synthesis of L-tryptophan from indole and L-serine. The chain is Tryptophan synthase beta chain from Trichormus variabilis (strain ATCC 29413 / PCC 7937) (Anabaena variabilis).